The primary structure comprises 110 residues: uncharacterized protein (110 aa).

It to M.jannaschii MJ1213 and A.aeolicus AA15.

This is an uncharacterized protein from Methanocaldococcus jannaschii (strain ATCC 43067 / DSM 2661 / JAL-1 / JCM 10045 / NBRC 100440) (Methanococcus jannaschii).